Here is a 420-residue protein sequence, read N- to C-terminus: ATP phosphoribosyltransferase regulatory subunit (420 aa).

This sequence belongs to the class-II aminoacyl-tRNA synthetase family. HisZ subfamily. Heteromultimer composed of HisG and HisZ subunits.

Its subcellular location is the cytoplasm. It participates in amino-acid biosynthesis; L-histidine biosynthesis; L-histidine from 5-phospho-alpha-D-ribose 1-diphosphate: step 1/9. In terms of biological role, required for the first step of histidine biosynthesis. May allow the feedback regulation of ATP phosphoribosyltransferase activity by histidine. This is ATP phosphoribosyltransferase regulatory subunit from Synechococcus sp. (strain ATCC 27144 / PCC 6301 / SAUG 1402/1) (Anacystis nidulans).